Here is a 212-residue protein sequence, read N- to C-terminus: Nitric oxide synthase (212 aa).

Tyr11 lines the heme b pocket. A calmodulin-binding region spans residues Lys30–Met50. Residues Ala60–Gly212 form the Flavodoxin-like domain. The tract at residues Ser155–Ser175 is disordered. The span at Asp158 to Phe173 shows a compositional bias: basic and acidic residues. Ala186–Gly212 contacts FMN.

This sequence belongs to the NOS family. Heme b is required as a cofactor. Requires FAD as cofactor. It depends on FMN as a cofactor.

The enzyme catalyses 2 L-arginine + 3 NADPH + 4 O2 + H(+) = 2 L-citrulline + 2 nitric oxide + 3 NADP(+) + 4 H2O. Functionally, produces nitric oxide (NO) which is a messenger molecule with diverse functions throughout the body. The sequence is that of Nitric oxide synthase from Squalus acanthias (Spiny dogfish).